Reading from the N-terminus, the 339-residue chain is Anthranilate phosphoribosyltransferase (339 aa).

5-phospho-alpha-D-ribose 1-diphosphate is bound by residues glycine 81, 84-85 (GD), threonine 89, 91-94 (NIST), 109-117 (KHGNRNLSS), and alanine 121. Anthranilate is bound at residue glycine 81. Position 93 (serine 93) interacts with Mg(2+). Asparagine 112 serves as a coordination point for anthranilate. Position 167 (arginine 167) interacts with anthranilate. Mg(2+) is bound by residues aspartate 226 and glutamate 227.

It belongs to the anthranilate phosphoribosyltransferase family. Homodimer. The cofactor is Mg(2+).

The enzyme catalyses N-(5-phospho-beta-D-ribosyl)anthranilate + diphosphate = 5-phospho-alpha-D-ribose 1-diphosphate + anthranilate. It functions in the pathway amino-acid biosynthesis; L-tryptophan biosynthesis; L-tryptophan from chorismate: step 2/5. Catalyzes the transfer of the phosphoribosyl group of 5-phosphorylribose-1-pyrophosphate (PRPP) to anthranilate to yield N-(5'-phosphoribosyl)-anthranilate (PRA). The chain is Anthranilate phosphoribosyltransferase from Roseobacter denitrificans (strain ATCC 33942 / OCh 114) (Erythrobacter sp. (strain OCh 114)).